The sequence spans 619 residues: Dihydroxy-acid dehydratase 1 (619 aa).

Asp-81 is a binding site for Mg(2+). [2Fe-2S] cluster is bound at residue Cys-122. Asp-123 and Lys-124 together coordinate Mg(2+). Lys-124 bears the N6-carboxylysine mark. Position 201 (Cys-201) interacts with [2Fe-2S] cluster. Residue Glu-496 coordinates Mg(2+). Catalysis depends on Ser-522, which acts as the Proton acceptor.

This sequence belongs to the IlvD/Edd family. In terms of assembly, homodimer. It depends on [2Fe-2S] cluster as a cofactor. Mg(2+) serves as cofactor.

The catalysed reaction is (2R)-2,3-dihydroxy-3-methylbutanoate = 3-methyl-2-oxobutanoate + H2O. The enzyme catalyses (2R,3R)-2,3-dihydroxy-3-methylpentanoate = (S)-3-methyl-2-oxopentanoate + H2O. It participates in amino-acid biosynthesis; L-isoleucine biosynthesis; L-isoleucine from 2-oxobutanoate: step 3/4. It functions in the pathway amino-acid biosynthesis; L-valine biosynthesis; L-valine from pyruvate: step 3/4. Functions in the biosynthesis of branched-chain amino acids. Catalyzes the dehydration of (2R,3R)-2,3-dihydroxy-3-methylpentanoate (2,3-dihydroxy-3-methylvalerate) into 2-oxo-3-methylpentanoate (2-oxo-3-methylvalerate) and of (2R)-2,3-dihydroxy-3-methylbutanoate (2,3-dihydroxyisovalerate) into 2-oxo-3-methylbutanoate (2-oxoisovalerate), the penultimate precursor to L-isoleucine and L-valine, respectively. The polypeptide is Dihydroxy-acid dehydratase 1 (Burkholderia lata (strain ATCC 17760 / DSM 23089 / LMG 22485 / NCIMB 9086 / R18194 / 383)).